A 37-amino-acid chain; its full sequence is Potassium channel toxin alpha-KTx 11.2 (37 aa).

3 disulfides stabilise this stretch: C8–C27, C13–C33, and C17–C35.

This sequence belongs to the short scorpion toxin superfamily. Potassium channel inhibitor family. Alpha-KTx 11 subfamily. As to expression, expressed by the venom gland.

Its subcellular location is the secreted. Functionally, binds and inhibits voltage-sensitive potassium channels. Inhibits the vertebrate potassium channel Kv1.1/KCNA1 with low affinity. This Parabuthus villosus (Black hairy thick-tailed scorpion) protein is Potassium channel toxin alpha-KTx 11.2.